Reading from the N-terminus, the 347-residue chain is Tetraacyldisaccharide 4'-kinase (347 aa).

An ATP-binding site is contributed by 54–61 (TVGGAGKT).

It belongs to the LpxK family.

The catalysed reaction is a lipid A disaccharide + ATP = a lipid IVA + ADP + H(+). Its pathway is glycolipid biosynthesis; lipid IV(A) biosynthesis; lipid IV(A) from (3R)-3-hydroxytetradecanoyl-[acyl-carrier-protein] and UDP-N-acetyl-alpha-D-glucosamine: step 6/6. Transfers the gamma-phosphate of ATP to the 4'-position of a tetraacyldisaccharide 1-phosphate intermediate (termed DS-1-P) to form tetraacyldisaccharide 1,4'-bis-phosphate (lipid IVA). The sequence is that of Tetraacyldisaccharide 4'-kinase from Rhizobium etli (strain CIAT 652).